The primary structure comprises 203 residues: Probable NADPH:quinone oxidoreductase 2 (203 aa).

It belongs to the SsuE family. As to quaternary structure, homotetramer. It depends on FMN as a cofactor.

The enzyme catalyses a quinone + NADH + H(+) = a quinol + NAD(+). The catalysed reaction is a quinone + NADPH + H(+) = a quinol + NADP(+). Functionally, the enzyme apparently serves as a quinone reductase in connection with conjugation reactions of hydroquinones involved in detoxification pathways. The polypeptide is Probable NADPH:quinone oxidoreductase 2 (Oryza sativa subsp. japonica (Rice)).